A 153-amino-acid polypeptide reads, in one-letter code: Fimbrial protein EcpC (153 aa).

Residues 1 to 8 constitute a propeptide, leader sequence; that stretch reads MLKQVQKG. Residue Phe-9 is modified to N-methylphenylalanine. The helical transmembrane segment at 9 to 29 threads the bilayer; the sequence is FTLIELMIVIAIIGILAAIAL. An intrachain disulfide couples Cys-130 to Cys-143.

It belongs to the N-Me-Phe pilin family.

It is found in the fimbrium. The protein resides in the membrane. The polypeptide is Fimbrial protein EcpC (ecpC) (Eikenella corrodens).